A 564-amino-acid polypeptide reads, in one-letter code: MLISRNKLILLLGIVFFERGKSATLSLPKAPSCGQSLVKVQPWNYFNIFSRILGGSQVEKGSYPWQVSLKQRQKHICGGSIVSPQWVITAAHCIANRNIVSTLNVTAGEYDLSQTDPGEQTLTIETVIIHPHFSTKKPMDYDIALLKMAGAFQFGHFVGPICLPELREQFEAGFICTTAGWGRLTEGGVLSQVLQEVNLPILTWEECVAALLTLKRPISGKTFLCTGFPDGGRDACQGDSGGSLMCRNKKGAWTLAGVTSWGLGCGRGWRNNVRKSDQGSPGIFTDISKVLPWIHEHIQTGNRRKSSRAWCSEQDVIVSGAEGKLHFPESLHLYYESKQRCVWTLLVPEEMHVLLSFSHLDVESCHHSYLSMYSLEDRPIGKFCGESLPSSILIGSNSLRLKFVSDATDNAARFNLTYKALKPNYIPDSGCSYLTVLFEEGLIQSLNYPENYSDKANCDWIFQASKHHLIKLSFQSLEIEESGDCTSDYVTVHSDVERKKEIARLCGYDVPTPVLSPSSIMLISFHSDENGTCRGFQATVSFIPKAGKKIELPTLWFPVLILVM.

The N-terminal stretch at 1 to 22 is a signal peptide; it reads MLISRNKLILLLGIVFFERGKS. A propeptide spans 23–51 (activation peptide); that stretch reads ATLSLPKAPSCGQSLVKVQPWNYFNIFSR. Residues 52 to 299 enclose the Peptidase S1 domain; that stretch reads ILGGSQVEKG…VLPWIHEHIQ (248 aa). A disulfide bridge links cysteine 77 with cysteine 93. Histidine 92 functions as the Charge relay system in the catalytic mechanism. Asparagine 104 is a glycosylation site (N-linked (GlcNAc...) asparagine). Glutamate 119 serves as a coordination point for Ca(2+). The active-site Charge relay system is aspartate 142. Disulfide bonds link cysteine 176/cysteine 246, cysteine 207/cysteine 225, cysteine 236/cysteine 265, cysteine 311/cysteine 341, and cysteine 365/cysteine 384. Residue serine 240 is the Charge relay system of the active site. CUB domains are found at residues 311 to 421 and 431 to 543; these read CSEQ…YKAL and CSYL…VSFI. Asparagine 415 and asparagine 451 each carry an N-linked (GlcNAc...) asparagine glycan. Disulfide bonds link cysteine 431–cysteine 458 and cysteine 485–cysteine 506. Asparagine 530 carries N-linked (GlcNAc...) asparagine glycosylation.

Belongs to the peptidase S1 family.

It is found in the secreted. May be required for sperm ADAM3 processing and consequential sperm fertilizing ability. In vitro, has an endopeptidase activity. This is Ovochymase-2 from Homo sapiens (Human).